A 603-amino-acid polypeptide reads, in one-letter code: Cdc42-interacting protein 4 (603 aa).

The required for podosome formation and interaction with AKAP9 and microtubules stretch occupies residues 1-117 (MDWGTELWDQ…EMKQERKMHF (117 aa)). Residues 1-117 (MDWGTELWDQ…EMKQERKMHF (117 aa)) are required for translocation to the plasma membrane in response to insulin. The F-BAR domain occupies 1-264 (MDWGTELWDQ…AAESVDAKND (264 aa)). A coiled-coil region spans residues 67 to 259 (FSQQQSFVQL…EGMKVAAESV (193 aa)). The segment at 293 to 539 (RVPSDSSLGT…YTEFDEDFEE (247 aa)) is interaction with CDC42. The tract at residues 293–603 (RVPSDSSLGT…PTSYLRVTLN (311 aa)) is interaction with PDE6G. Residues 295–358 (PSDSSLGTPD…PSSPRSGRDP (64 aa)) are disordered. A phosphoserine mark is found at Ser296, Ser298, and Ser299. Over residues 316 to 329 (SRAKRWPFGKKNKP) the composition is skewed to basic residues. The segment covering 333-346 (SLSLLGGHLPSTLS) has biased composition (low complexity). A phosphoserine mark is found at Ser335 and Ser351. Positions 388-481 (TEDFSHLPPE…ESRVLSNRGD (94 aa)) form a coiled coil. The REM-1 domain occupies 393-470 (HLPPEQQRKR…VQKYEAWLAE (78 aa)). Positions 471 to 603 (AESRVLSNRG…PTSYLRVTLN (133 aa)) are required for interaction with FASLG and localization to lysosomes. The disordered stretch occupies residues 477–541 (SNRGDSLSRH…EFDEDFEEPA (65 aa)). Ser482 is modified (phosphoserine). Residues 487 to 543 (ARPPDPPTTAPPDSSSSSTNSGSQDNKESSSEEPPSEGQDTPIYTEFDEDFEEPASP) form an interaction with DNM2 and WASL region. Over residues 497-510 (PPDSSSSSTNSGSQ) the composition is skewed to low complexity. Positions 532 to 603 (EFDEDFEEPA…PTSYLRVTLN (72 aa)) are interaction with DNM1 and WASL. Residues 540 to 603 (PASPIGQCVA…PTSYLRVTLN (64 aa)) form a required for podosome formation region. The SH3 domain occupies 542–603 (SPIGQCVAIY…PTSYLRVTLN (62 aa)). An interaction with WAS region spans residues 546–603 (QCVAIYHFEGSSEGTVSMSEGEDLSLMEEDKGDGWTRVRRKQGAEGYVPTSYLRVTLN). Residues 548–603 (VAIYHFEGSSEGTVSMSEGEDLSLMEEDKGDGWTRVRRKQGAEGYVPTSYLRVTLN) are interaction with ARHGAP17, DAAM1, DIAPH1 and DIAPH2.

Belongs to the FNBP1 family. As to quaternary structure, homodimerizes, the dimers can polymerize end-to-end to form filamentous structures. Interacts with AKAP9, ARHGAP17, DAAM1, DIAPH1, DIAPH2, DNM1, FASLG/FASL, GAPVD1, LYN, microtubules, PDE6G, SRC and WAS/WASP. Interacts with the ligand binding domain of the thyroid receptor (TR) in the presence of thyroid hormone. May interact with CTNNB1 and HD/HTT. Interacts specifically with GTP-bound CDC42 and RHOQ. Interacts with DNM2 and WASL. In terms of processing, tyrosine phosphorylated. Also phosphorylated by PKA.

Its subcellular location is the cytoplasm. It localises to the cytoskeleton. The protein resides in the cell cortex. The protein localises to the lysosome. It is found in the golgi apparatus. Its subcellular location is the cell membrane. It localises to the cell projection. The protein resides in the phagocytic cup. Its function is as follows. Required to coordinate membrane tubulation with reorganization of the actin cytoskeleton during endocytosis. Binds to lipids such as phosphatidylinositol 4,5-bisphosphate and phosphatidylserine and promotes membrane invagination and the formation of tubules. Also promotes CDC42-induced actin polymerization by recruiting WASL/N-WASP which in turn activates the Arp2/3 complex. Actin polymerization may promote the fission of membrane tubules to form endocytic vesicles. Required for the formation of podosomes, actin-rich adhesion structures specific to monocyte-derived cells. May be required for the lysosomal retention of FASLG/FASL. Required for translocation of GLUT4 to the plasma membrane in response to insulin signaling. This is Cdc42-interacting protein 4 (Trip10) from Mus musculus (Mouse).